The sequence spans 158 residues: NAD(P)H-quinone oxidoreductase subunit N (158 aa).

It belongs to the complex I NdhN subunit family. In terms of assembly, NDH-1 can be composed of about 15 different subunits; different subcomplexes with different compositions have been identified which probably have different functions.

Its subcellular location is the cellular thylakoid membrane. The catalysed reaction is a plastoquinone + NADH + (n+1) H(+)(in) = a plastoquinol + NAD(+) + n H(+)(out). The enzyme catalyses a plastoquinone + NADPH + (n+1) H(+)(in) = a plastoquinol + NADP(+) + n H(+)(out). Its function is as follows. NDH-1 shuttles electrons from an unknown electron donor, via FMN and iron-sulfur (Fe-S) centers, to quinones in the respiratory and/or the photosynthetic chain. The immediate electron acceptor for the enzyme in this species is believed to be plastoquinone. Couples the redox reaction to proton translocation, and thus conserves the redox energy in a proton gradient. Cyanobacterial NDH-1 also plays a role in inorganic carbon-concentration. The sequence is that of NAD(P)H-quinone oxidoreductase subunit N from Nostoc punctiforme (strain ATCC 29133 / PCC 73102).